The following is a 291-amino-acid chain: Probable xyloglucan endotransglucosylase/hydrolase protein 16 (291 aa).

The first 24 residues, 1–24, serve as a signal peptide directing secretion; that stretch reads MGRILNRTVLMTLLVVTMAGTAFS. One can recognise a GH16 domain in the interval 25 to 215; the sequence is GSFNEEFDLT…WSKAPFTAYY (191 aa). Catalysis depends on E101, which acts as the Nucleophile. Residue E105 is the Proton donor of the active site. E105 lines the xyloglucan pocket. N-linked (GlcNAc...) asparagine glycosylation is present at N109. Residues 118–120, 128–130, 194–195, and G199 contribute to the xyloglucan site; these read HTN, NRE, and DW. Intrachain disulfides connect C223–C232 and C272–C286. R277 lines the xyloglucan pocket.

Belongs to the glycosyl hydrolase 16 family. XTH group 2 subfamily. Post-translationally, contains at least one intrachain disulfide bond essential for its enzymatic activity.

The protein localises to the secreted. It is found in the cell wall. It localises to the extracellular space. The protein resides in the apoplast. It carries out the reaction breaks a beta-(1-&gt;4) bond in the backbone of a xyloglucan and transfers the xyloglucanyl segment on to O-4 of the non-reducing terminal glucose residue of an acceptor, which can be a xyloglucan or an oligosaccharide of xyloglucan.. Functionally, catalyzes xyloglucan endohydrolysis (XEH) and/or endotransglycosylation (XET). Cleaves and religates xyloglucan polymers, an essential constituent of the primary cell wall, and thereby participates in cell wall construction of growing tissues. The chain is Probable xyloglucan endotransglucosylase/hydrolase protein 16 (XTH16) from Arabidopsis thaliana (Mouse-ear cress).